The chain runs to 478 residues: ATP synthase subunit beta (478 aa).

158–165 (GGAGVGKT) lines the ATP pocket.

It belongs to the ATPase alpha/beta chains family. In terms of assembly, F-type ATPases have 2 components, CF(1) - the catalytic core - and CF(0) - the membrane proton channel. CF(1) has five subunits: alpha(3), beta(3), gamma(1), delta(1), epsilon(1). CF(0) has three main subunits: a(1), b(2) and c(9-12). The alpha and beta chains form an alternating ring which encloses part of the gamma chain. CF(1) is attached to CF(0) by a central stalk formed by the gamma and epsilon chains, while a peripheral stalk is formed by the delta and b chains.

The protein localises to the cell inner membrane. The enzyme catalyses ATP + H2O + 4 H(+)(in) = ADP + phosphate + 5 H(+)(out). In terms of biological role, produces ATP from ADP in the presence of a proton gradient across the membrane. The catalytic sites are hosted primarily by the beta subunits. In Rhizobium leguminosarum bv. trifolii (strain WSM2304), this protein is ATP synthase subunit beta.